We begin with the raw amino-acid sequence, 449 residues long: UDP-N-acetylglucosamine 1-carboxyvinyltransferase (449 aa).

51-52 contributes to the phosphoenolpyruvate binding site; it reads KN. Arginine 121 is a UDP-N-acetyl-alpha-D-glucosamine binding site. Cysteine 145 (proton donor) is an active-site residue. At cysteine 145 the chain carries 2-(S-cysteinyl)pyruvic acid O-phosphothioketal. Residues 150–154, aspartate 333, and isoleucine 355 contribute to the UDP-N-acetyl-alpha-D-glucosamine site; that span reads RPVDQ.

It belongs to the EPSP synthase family. MurA subfamily.

It is found in the cytoplasm. The enzyme catalyses phosphoenolpyruvate + UDP-N-acetyl-alpha-D-glucosamine = UDP-N-acetyl-3-O-(1-carboxyvinyl)-alpha-D-glucosamine + phosphate. It functions in the pathway cell wall biogenesis; peptidoglycan biosynthesis. Its function is as follows. Cell wall formation. Adds enolpyruvyl to UDP-N-acetylglucosamine. This is UDP-N-acetylglucosamine 1-carboxyvinyltransferase from Burkholderia lata (strain ATCC 17760 / DSM 23089 / LMG 22485 / NCIMB 9086 / R18194 / 383).